Here is a 364-residue protein sequence, read N- to C-terminus: Aminomethyltransferase (364 aa).

This sequence belongs to the GcvT family. In terms of assembly, the glycine cleavage system is composed of four proteins: P, T, L and H.

It carries out the reaction N(6)-[(R)-S(8)-aminomethyldihydrolipoyl]-L-lysyl-[protein] + (6S)-5,6,7,8-tetrahydrofolate = N(6)-[(R)-dihydrolipoyl]-L-lysyl-[protein] + (6R)-5,10-methylene-5,6,7,8-tetrahydrofolate + NH4(+). The glycine cleavage system catalyzes the degradation of glycine. The chain is Aminomethyltransferase from Shigella sonnei (strain Ss046).